The chain runs to 191 residues: Phosphoheptose isomerase (191 aa).

The region spanning 37–191 (IADSFKQDGK…IIQLIEKEME (155 aa)) is the SIS domain. A substrate-binding site is contributed by 52 to 54 (NGG). His-61 and Glu-65 together coordinate Zn(2+). Residues Glu-65, 93 to 94 (ND), 119 to 121 (STS), Ser-124, and Gln-172 each bind substrate. Zn(2+) contacts are provided by Gln-172 and His-180.

This sequence belongs to the SIS family. GmhA subfamily. In terms of assembly, homotetramer. Zn(2+) serves as cofactor.

Its subcellular location is the cytoplasm. The enzyme catalyses 2 D-sedoheptulose 7-phosphate = D-glycero-alpha-D-manno-heptose 7-phosphate + D-glycero-beta-D-manno-heptose 7-phosphate. The protein operates within carbohydrate biosynthesis; D-glycero-D-manno-heptose 7-phosphate biosynthesis; D-glycero-alpha-D-manno-heptose 7-phosphate and D-glycero-beta-D-manno-heptose 7-phosphate from sedoheptulose 7-phosphate: step 1/1. It participates in bacterial outer membrane biogenesis; LPS core biosynthesis. Catalyzes the isomerization of sedoheptulose 7-phosphate in D-glycero-D-manno-heptose 7-phosphate. This chain is Phosphoheptose isomerase, found in Vibrio parahaemolyticus serotype O3:K6 (strain RIMD 2210633).